We begin with the raw amino-acid sequence, 300 residues long: UDP-N-acetylenolpyruvoylglucosamine reductase (300 aa).

The 165-residue stretch at 30-194 folds into the FAD-binding PCMH-type domain; sequence RVGGPADFFV…IGATFVLDSD (165 aa). The active site involves R174. The active-site Proton donor is S223. E293 is a catalytic residue.

This sequence belongs to the MurB family. FAD is required as a cofactor.

It localises to the cytoplasm. The enzyme catalyses UDP-N-acetyl-alpha-D-muramate + NADP(+) = UDP-N-acetyl-3-O-(1-carboxyvinyl)-alpha-D-glucosamine + NADPH + H(+). The protein operates within cell wall biogenesis; peptidoglycan biosynthesis. Cell wall formation. This chain is UDP-N-acetylenolpyruvoylglucosamine reductase, found in Geobacter sulfurreducens (strain ATCC 51573 / DSM 12127 / PCA).